An 843-amino-acid polypeptide reads, in one-letter code: DNA gyrase subunit A (843 aa).

The 468-residue stretch at 61-528 (LPDVRDGLKP…ESSTFNAEDL (468 aa)) folds into the Topo IIA-type catalytic domain. The O-(5'-phospho-DNA)-tyrosine intermediate role is filled by Tyr149. Positions 555 to 561 (QKRGGKG) match the GyrA-box motif.

It belongs to the type II topoisomerase GyrA/ParC subunit family. As to quaternary structure, heterotetramer, composed of two GyrA and two GyrB chains. In the heterotetramer, GyrA contains the active site tyrosine that forms a transient covalent intermediate with DNA, while GyrB binds cofactors and catalyzes ATP hydrolysis.

It localises to the cytoplasm. It catalyses the reaction ATP-dependent breakage, passage and rejoining of double-stranded DNA.. In terms of biological role, a type II topoisomerase that negatively supercoils closed circular double-stranded (ds) DNA in an ATP-dependent manner to modulate DNA topology and maintain chromosomes in an underwound state. Negative supercoiling favors strand separation, and DNA replication, transcription, recombination and repair, all of which involve strand separation. Also able to catalyze the interconversion of other topological isomers of dsDNA rings, including catenanes and knotted rings. Type II topoisomerases break and join 2 DNA strands simultaneously in an ATP-dependent manner. In Leptospira biflexa serovar Patoc (strain Patoc 1 / Ames), this protein is DNA gyrase subunit A.